Consider the following 85-residue polypeptide: NADH-ubiquinone oxidoreductase chain 4L (85 aa).

A run of 2 helical transmembrane segments spans residues 21–41 (LLVTLLSLEFLILLLFSLLVY) and 51–71 (FIFLSVTVCEGALGFSVLVSL).

Belongs to the complex I subunit 4L family.

It localises to the mitochondrion membrane. It catalyses the reaction a ubiquinone + NADH + 5 H(+)(in) = a ubiquinol + NAD(+) + 4 H(+)(out). Functionally, core subunit of the mitochondrial membrane respiratory chain NADH dehydrogenase (Complex I) that is believed to belong to the minimal assembly required for catalysis. Complex I functions in the transfer of electrons from NADH to the respiratory chain. The immediate electron acceptor for the enzyme is believed to be ubiquinone. In Artemia franciscana (Brine shrimp), this protein is NADH-ubiquinone oxidoreductase chain 4L (ND4L).